A 182-amino-acid polypeptide reads, in one-letter code: Probable inosine/xanthosine triphosphatase (182 aa).

Glu-65 lines the Mg(2+) pocket. Substrate is bound at residue 65–66 (EA).

This sequence belongs to the YjjX NTPase family. As to quaternary structure, homodimer. Requires Mg(2+) as cofactor. The cofactor is Mn(2+).

The catalysed reaction is XTP + H2O = XDP + phosphate + H(+). It catalyses the reaction ITP + H2O = IDP + phosphate + H(+). Its function is as follows. Phosphatase that hydrolyzes non-canonical purine nucleotides such as XTP and ITP to their respective diphosphate derivatives. Probably excludes non-canonical purines from DNA/RNA precursor pool, thus preventing their incorporation into DNA/RNA and avoiding chromosomal lesions. This is Probable inosine/xanthosine triphosphatase from Pyrobaculum neutrophilum (strain DSM 2338 / JCM 9278 / NBRC 100436 / V24Sta) (Thermoproteus neutrophilus).